The primary structure comprises 91 residues: Large ribosomal subunit protein bL27 (91 aa).

The protein belongs to the bacterial ribosomal protein bL27 family.

This Deinococcus deserti (strain DSM 17065 / CIP 109153 / LMG 22923 / VCD115) protein is Large ribosomal subunit protein bL27.